The chain runs to 75 residues: Cytochrome c oxidase subunit 6C (75 aa).

Topologically, residues Met1–Gly13 are mitochondrial matrix. The helical transmembrane segment at Leu14–Arg54 threads the bilayer. Over Asn55–Lys75 the chain is Mitochondrial intermembrane.

The protein belongs to the cytochrome c oxidase subunit 6c family. In terms of assembly, component of the cytochrome c oxidase (complex IV, CIV), a multisubunit enzyme composed of 14 subunits. The complex is composed of a catalytic core of 3 subunits MT-CO1, MT-CO2 and MT-CO3, encoded in the mitochondrial DNA, and 11 supernumerary subunits COX4I, COX5A, COX5B, COX6A, COX6B, COX6C, COX7A, COX7B, COX7C, COX8 and NDUFA4, which are encoded in the nuclear genome. The complex exists as a monomer or a dimer and forms supercomplexes (SCs) in the inner mitochondrial membrane with NADH-ubiquinone oxidoreductase (complex I, CI) and ubiquinol-cytochrome c oxidoreductase (cytochrome b-c1 complex, complex III, CIII), resulting in different assemblies (supercomplex SCI(1)III(2)IV(1) and megacomplex MCI(2)III(2)IV(2)).

It is found in the mitochondrion inner membrane. Its pathway is energy metabolism; oxidative phosphorylation. Its function is as follows. Component of the cytochrome c oxidase, the last enzyme in the mitochondrial electron transport chain which drives oxidative phosphorylation. The respiratory chain contains 3 multisubunit complexes succinate dehydrogenase (complex II, CII), ubiquinol-cytochrome c oxidoreductase (cytochrome b-c1 complex, complex III, CIII) and cytochrome c oxidase (complex IV, CIV), that cooperate to transfer electrons derived from NADH and succinate to molecular oxygen, creating an electrochemical gradient over the inner membrane that drives transmembrane transport and the ATP synthase. Cytochrome c oxidase is the component of the respiratory chain that catalyzes the reduction of oxygen to water. Electrons originating from reduced cytochrome c in the intermembrane space (IMS) are transferred via the dinuclear copper A center (CU(A)) of subunit 2 and heme A of subunit 1 to the active site in subunit 1, a binuclear center (BNC) formed by heme A3 and copper B (CU(B)). The BNC reduces molecular oxygen to 2 water molecules using 4 electrons from cytochrome c in the IMS and 4 protons from the mitochondrial matrix. This chain is Cytochrome c oxidase subunit 6C (COX6C), found in Carlito syrichta (Philippine tarsier).